The chain runs to 334 residues: N-acetyl-gamma-glutamyl-phosphate reductase (334 aa).

C154 is a catalytic residue.

The protein belongs to the NAGSA dehydrogenase family. Type 1 subfamily.

The protein resides in the cytoplasm. It catalyses the reaction N-acetyl-L-glutamate 5-semialdehyde + phosphate + NADP(+) = N-acetyl-L-glutamyl 5-phosphate + NADPH + H(+). It functions in the pathway amino-acid biosynthesis; L-arginine biosynthesis; N(2)-acetyl-L-ornithine from L-glutamate: step 3/4. Catalyzes the NADPH-dependent reduction of N-acetyl-5-glutamyl phosphate to yield N-acetyl-L-glutamate 5-semialdehyde. The sequence is that of N-acetyl-gamma-glutamyl-phosphate reductase from Yersinia pseudotuberculosis serotype I (strain IP32953).